We begin with the raw amino-acid sequence, 79 residues long: Acyl carrier protein (79 aa).

Positions 2–77 (DNIEQRVKKI…QAIDYARANV (76 aa)) constitute a Carrier domain. Serine 37 carries the post-translational modification O-(pantetheine 4'-phosphoryl)serine.

This sequence belongs to the acyl carrier protein (ACP) family. Post-translationally, 4'-phosphopantetheine is transferred from CoA to a specific serine of apo-ACP by AcpS. This modification is essential for activity because fatty acids are bound in thioester linkage to the sulfhydryl of the prosthetic group.

Its subcellular location is the cytoplasm. It functions in the pathway lipid metabolism; fatty acid biosynthesis. Carrier of the growing fatty acid chain in fatty acid biosynthesis. This is Acyl carrier protein from Burkholderia cenocepacia (strain HI2424).